Here is a 330-residue protein sequence, read N- to C-terminus: UPF0353 protein MAP_3434 (330 aa).

2 helical membrane passes run 21–41 (GMLL…VVQA) and 63–83 (LPIA…ATPT). Residues 94-289 (VIMLVIDMSQ…GELQKSYNAI (196 aa)) enclose the VWFA domain. Residues 304-324 (AGWLRLGVLTALIATALALLI) form a helical membrane-spanning segment.

The protein belongs to the UPF0353 family.

Its subcellular location is the cell membrane. The protein is UPF0353 protein MAP_3434 of Mycolicibacterium paratuberculosis (strain ATCC BAA-968 / K-10) (Mycobacterium paratuberculosis).